Consider the following 292-residue polypeptide: uncharacterized protein (292 aa).

A Glycyl lysine isopeptide (Lys-Gly) (interchain with G-Cter in SUMO2) cross-link involves residue K8. The tract at residues 47–67 (TKRKMLPSSSSRMRSDGFDEE) is disordered. Residue K76 forms a Glycyl lysine isopeptide (Lys-Gly) (interchain with G-Cter in SUMO2) linkage. Phosphothreonine is present on N94. A phosphoserine mark is found at K96 and F97. Residues 122–292 (ETDSDQQDIT…ERSAESSEDD (171 aa)) are disordered. Position 123 is a phosphothreonine (T123). Phosphoserine occurs at positions 125 and 126. The span at 128–140 (QDITNGKKTSPQV) shows a compositional bias: polar residues. The segment covering 147–173 (SRKHKKSKKSHKKKQKKRSHKKQKKSK) has biased composition (basic residues). Residues 180–194 (TADSSSEFSEETGAS) show a composition bias toward polar residues. Composition is skewed to basic residues over residues 197-215 (RKGK…KSLK) and 247-259 (KKTK…KKAH). The segment covering 280–292 (ATDERSAESSEDD) has biased composition (basic and acidic residues).

This is an uncharacterized protein from Homo sapiens (Human).